We begin with the raw amino-acid sequence, 263 residues long: Thiamine thiazole synthase (263 aa).

NAD(+)-binding positions include Ser-43, 62–63, Gly-70, Val-134, and 160–162; these read ER and HID. Fe cation-binding residues include Asp-162 and His-177. Residues Ser-180 and Met-227 each coordinate NAD(+). Position 237 (Arg-237) interacts with glycine.

It belongs to the THI4 family. Homooctamer; tetramer of dimers. The cofactor is Fe(2+).

The enzyme catalyses hydrogen sulfide + glycine + NAD(+) = ADP-5-ethyl-4-methylthiazole-2-carboxylate + nicotinamide + 3 H2O + H(+). The protein operates within cofactor biosynthesis; thiamine diphosphate biosynthesis. Functionally, involved in the biosynthesis of the thiazole moiety of thiamine. Catalyzes the conversion of NAD and glycine to adenosine diphosphate 5-(2-hydroxyethyl)-4-methylthiazole-2-carboxylate (ADT), an adenylated thiazole intermediate, using free sulfide as a source of sulfur. The polypeptide is Thiamine thiazole synthase (Methanococcus aeolicus (strain ATCC BAA-1280 / DSM 17508 / OCM 812 / Nankai-3)).